The primary structure comprises 778 residues: Endonuclease MutS2 (778 aa).

328 to 335 lines the ATP pocket; sequence GPNTGGKT. The Smr domain maps to 702–777; that stretch reads LDLRGKRYEE…GSGATIVTFK (76 aa).

It belongs to the DNA mismatch repair MutS family. MutS2 subfamily. Homodimer. Binds to stalled ribosomes, contacting rRNA.

Endonuclease that is involved in the suppression of homologous recombination and thus may have a key role in the control of bacterial genetic diversity. Functionally, acts as a ribosome collision sensor, splitting the ribosome into its 2 subunits. Detects stalled/collided 70S ribosomes which it binds and splits by an ATP-hydrolysis driven conformational change. Acts upstream of the ribosome quality control system (RQC), a ribosome-associated complex that mediates the extraction of incompletely synthesized nascent chains from stalled ribosomes and their subsequent degradation. Probably generates substrates for RQC. This is Endonuclease MutS2 from Streptococcus pneumoniae (strain P1031).